The sequence spans 60 residues: Large ribosomal subunit protein bL32 (60 aa).

Belongs to the bacterial ribosomal protein bL32 family.

This chain is Large ribosomal subunit protein bL32, found in Hydrogenobaculum sp. (strain Y04AAS1).